The chain runs to 120 residues: Large ribosomal subunit protein uL18 (120 aa).

Residues 1–22 (MKLTRRESKNRRHRRVRGKVVG) form a disordered region. Residues 8–18 (SKNRRHRRVRG) show a composition bias toward basic residues.

The protein belongs to the universal ribosomal protein uL18 family. As to quaternary structure, part of the 50S ribosomal subunit; part of the 5S rRNA/L5/L18/L25 subcomplex. Contacts the 5S and 23S rRNAs.

This is one of the proteins that bind and probably mediate the attachment of the 5S RNA into the large ribosomal subunit, where it forms part of the central protuberance. The protein is Large ribosomal subunit protein uL18 of Nostoc punctiforme (strain ATCC 29133 / PCC 73102).